The following is an 84-amino-acid chain: MKANIHPAYAETTVVCGCGNTFQTRSTKPGGRIVVEVCSQCHPFYTGKQKILDSGGRVARFEKRYGKRKVGVDQVAAYPEQNNK.

Residues cysteine 16, cysteine 18, cysteine 38, and cysteine 41 each contribute to the Zn(2+) site.

The protein belongs to the bacterial ribosomal protein bL31 family. Type A subfamily. Part of the 50S ribosomal subunit. The cofactor is Zn(2+).

In terms of biological role, binds the 23S rRNA. In Mycobacterium leprae (strain Br4923), this protein is Large ribosomal subunit protein bL31.